A 99-amino-acid chain; its full sequence is Single insulin-like growth factor-binding domain protein-2 (99 aa).

A signal peptide spans 1–18; that stretch reads MESLFIFAFGMMLSSASA. One can recognise an IGFBP N-terminal domain in the interval 19 to 98; that stretch reads LSCIPCVPEE…GQEVGRCRKK (80 aa). S20 is a glycosylation site (O-linked (GalNAc...) serine). 6 cysteine pairs are disulfide-bonded: C21–C44, C24–C46, C29–C47, C35–C50, C58–C74, and C68–C95.

Expressed in hemocytes.

The protein localises to the secreted. Its function is as follows. Has a role in the innate immune system. This is Single insulin-like growth factor-binding domain protein-2 from Cupiennius salei (American wandering spider).